Here is a 468-residue protein sequence, read N- to C-terminus: Peroxisome proliferator-activated receptor alpha (468 aa).

Positions 99 to 173 (NIECRICGDK…VGMSHNAIRF (75 aa)) form a DNA-binding region, nuclear receptor. NR C4-type zinc fingers lie at residues 102–122 (CRIC…CEGC) and 139–161 (CDRS…FHKC). The region spanning 239 to 466 (FVIHDMETLC…HPLLQEIYRD (228 aa)) is the NR LBD domain. The tract at residues 304 to 433 (DQVTLLKYGV…PKLLQKMVDL (130 aa)) is required for heterodimerization with RXRA.

Belongs to the nuclear hormone receptor family. NR1 subfamily. Heterodimer; with RXRA. This heterodimerization is required for DNA binding and transactivation activity. Interacts with NCOA3 coactivator. Interacts with CITED2; the interaction stimulates its transcriptional activity. Also interacts with PPARBP in vitro. Interacts with AKAP13, LPIN1, PRDM16 and coactivator NCOA6. Interacts with ASXL1 and ASXL2. Interacts with PER2. Interacts with SIRT1; the interaction seems to be modulated by NAD(+) levels. Interacts with CRY1 and CRY2. In hepatocytes, interacts with PAQR3 and HUWE1; the interactions promote PPARA poylubiquitination and HUWE1-mediated degradation. Ubiquitinated by E3 ubiquitin-protein ligase HUWE1; leading to proteasomal degradation. Post-translationally, phosphorylated. Highly expressed in liver, kidney and heart. Very weakly expressed in brain and testis.

It is found in the nucleus. Its function is as follows. Ligand-activated transcription factor. Key regulator of lipid metabolism. Activated by the endogenous ligand 1-palmitoyl-2-oleoyl-sn-glycerol-3-phosphocholine (16:0/18:1-GPC). Activated by oleylethanolamide, a naturally occurring lipid that regulates satiety. Receptor for peroxisome proliferators such as hypolipidemic drugs and fatty acids. Regulates the peroxisomal beta-oxidation pathway of fatty acids. Functions as a transcription activator for the ACOX1 and P450 genes. Transactivation activity requires heterodimerization with RXRA and is antagonized by NR2C2. May be required for the propagation of clock information to metabolic pathways regulated by PER2. The sequence is that of Peroxisome proliferator-activated receptor alpha (Ppara) from Mus musculus (Mouse).